We begin with the raw amino-acid sequence, 445 residues long: Competence protein E (445 aa).

The N-terminal stretch at 1-23 (MKKYFLKCGYFLVCFCLPLIVFA) is a signal peptide.

The protein belongs to the bacterial secretin family. PilQ subfamily.

The protein resides in the cell outer membrane. Functionally, involved in transformation (genetic competence for DNA uptake). The chain is Competence protein E (comE) from Haemophilus influenzae (strain ATCC 51907 / DSM 11121 / KW20 / Rd).